The sequence spans 303 residues: Glycine--tRNA ligase alpha subunit (303 aa).

It belongs to the class-II aminoacyl-tRNA synthetase family. In terms of assembly, tetramer of two alpha and two beta subunits.

Its subcellular location is the cytoplasm. It carries out the reaction tRNA(Gly) + glycine + ATP = glycyl-tRNA(Gly) + AMP + diphosphate. This is Glycine--tRNA ligase alpha subunit from Cronobacter sakazakii (strain ATCC BAA-894) (Enterobacter sakazakii).